The following is a 269-amino-acid chain: Tryptophan synthase alpha chain (269 aa).

Residues glutamate 49 and aspartate 60 each act as proton acceptor in the active site.

Belongs to the TrpA family. Tetramer of two alpha and two beta chains.

It carries out the reaction (1S,2R)-1-C-(indol-3-yl)glycerol 3-phosphate + L-serine = D-glyceraldehyde 3-phosphate + L-tryptophan + H2O. It participates in amino-acid biosynthesis; L-tryptophan biosynthesis; L-tryptophan from chorismate: step 5/5. Its function is as follows. The alpha subunit is responsible for the aldol cleavage of indoleglycerol phosphate to indole and glyceraldehyde 3-phosphate. This is Tryptophan synthase alpha chain from Pseudomonas putida (strain ATCC 700007 / DSM 6899 / JCM 31910 / BCRC 17059 / LMG 24140 / F1).